Reading from the N-terminus, the 424-residue chain is Glucose-1-phosphate adenylyltransferase (424 aa).

Residues Y112, G177, 192-193 (EK), and S210 each bind alpha-D-glucose 1-phosphate.

The protein belongs to the bacterial/plant glucose-1-phosphate adenylyltransferase family. Homotetramer.

The catalysed reaction is alpha-D-glucose 1-phosphate + ATP + H(+) = ADP-alpha-D-glucose + diphosphate. It participates in glycan biosynthesis; glycogen biosynthesis. Functionally, involved in the biosynthesis of ADP-glucose, a building block required for the elongation reactions to produce glycogen. Catalyzes the reaction between ATP and alpha-D-glucose 1-phosphate (G1P) to produce pyrophosphate and ADP-Glc. This Methylococcus capsulatus (strain ATCC 33009 / NCIMB 11132 / Bath) protein is Glucose-1-phosphate adenylyltransferase.